The chain runs to 390 residues: Flap endonuclease 1-1 (390 aa).

Positions 1 to 108 (MGIHQLMQFL…GELARRKKLK (108 aa)) are N-domain. Asp34 contributes to the Mg(2+) binding site. A DNA-binding site is contributed by Arg74. Mg(2+) contacts are provided by Asp90, Glu162, Glu164, Asp183, and Asp185. An I-domain region spans residues 126 to 254 (QALLQHQRTT…GTAYKLIKEF (129 aa)). Residue Glu162 coordinates DNA. 2 residues coordinate DNA: Gly232 and Asp234. Residue Asp234 participates in Mg(2+) binding. The interaction with PCNA stretch occupies residues 348–356 (FQSRLENFF). Residues 359-390 (TTKIIHPNNSKAKGKANKKNEQTQKSGGKKKI) form a disordered region.

The protein belongs to the XPG/RAD2 endonuclease family. FEN1 subfamily. Interacts with PCNA. Three molecules of FEN1 bind to one PCNA trimer with each molecule binding to one PCNA monomer. PCNA stimulates the nuclease activity without altering cleavage specificity. Mg(2+) serves as cofactor. In terms of processing, phosphorylated. Phosphorylation upon DNA damage induces relocalization to the nuclear plasma.

It localises to the nucleus. The protein localises to the nucleolus. The protein resides in the nucleoplasm. Its subcellular location is the mitochondrion. Structure-specific nuclease with 5'-flap endonuclease and 5'-3' exonuclease activities involved in DNA replication and repair. During DNA replication, cleaves the 5'-overhanging flap structure that is generated by displacement synthesis when DNA polymerase encounters the 5'-end of a downstream Okazaki fragment. It enters the flap from the 5'-end and then tracks to cleave the flap base, leaving a nick for ligation. Also involved in the long patch base excision repair (LP-BER) pathway, by cleaving within the apurinic/apyrimidinic (AP) site-terminated flap. Acts as a genome stabilization factor that prevents flaps from equilibrating into structures that lead to duplications and deletions. Also possesses 5'-3' exonuclease activity on nicked or gapped double-stranded DNA, and exhibits RNase H activity. Also involved in replication and repair of rDNA and in repairing mitochondrial DNA. The sequence is that of Flap endonuclease 1-1 from Paramecium tetraurelia.